A 313-amino-acid chain; its full sequence is Malate dehydrogenase (313 aa).

NAD(+) contacts are provided by residues 11–16 (GAGNIG) and aspartate 35. Substrate contacts are provided by arginine 86 and arginine 92. Residues asparagine 99 and 122–124 (ISN) contribute to the NAD(+) site. Asparagine 124 and arginine 155 together coordinate substrate. Histidine 179 serves as the catalytic Proton acceptor.

Belongs to the LDH/MDH superfamily. MDH type 3 family.

The catalysed reaction is (S)-malate + NAD(+) = oxaloacetate + NADH + H(+). In terms of biological role, catalyzes the reversible oxidation of malate to oxaloacetate. This chain is Malate dehydrogenase, found in Sorangium cellulosum (strain So ce56) (Polyangium cellulosum (strain So ce56)).